The following is a 654-amino-acid chain: Fructose-1,6-bisphosphatase class 3 (654 aa).

Residues 288 to 307 (NPAFKPKKRPDKHERLTQRE) are disordered. A compositionally biased stretch (basic and acidic residues) spans 298 to 307 (DKHERLTQRE).

Belongs to the FBPase class 3 family. The cofactor is Mn(2+).

It carries out the reaction beta-D-fructose 1,6-bisphosphate + H2O = beta-D-fructose 6-phosphate + phosphate. It participates in carbohydrate biosynthesis; gluconeogenesis. The chain is Fructose-1,6-bisphosphatase class 3 from Staphylococcus aureus (strain bovine RF122 / ET3-1).